We begin with the raw amino-acid sequence, 248 residues long: tRNA pseudouridine synthase A (248 aa).

The active-site Nucleophile is Asp-53. Tyr-111 is a binding site for substrate.

The protein belongs to the tRNA pseudouridine synthase TruA family. As to quaternary structure, homodimer.

It carries out the reaction uridine(38/39/40) in tRNA = pseudouridine(38/39/40) in tRNA. Formation of pseudouridine at positions 38, 39 and 40 in the anticodon stem and loop of transfer RNAs. The polypeptide is tRNA pseudouridine synthase A (Listeria monocytogenes serovar 1/2a (strain ATCC BAA-679 / EGD-e)).